Reading from the N-terminus, the 311-residue chain is Urease accessory protein UreD (311 aa).

The protein belongs to the UreD family. As to quaternary structure, ureD, UreF and UreG form a complex that acts as a GTP-hydrolysis-dependent molecular chaperone, activating the urease apoprotein by helping to assemble the nickel containing metallocenter of UreC. The UreE protein probably delivers the nickel.

The protein resides in the cytoplasm. Its function is as follows. Required for maturation of urease via the functional incorporation of the urease nickel metallocenter. The polypeptide is Urease accessory protein UreD (Synechococcus sp. (strain CC9605)).